The chain runs to 139 residues: Plasmid stability protein StbB (139 aa).

The PINc domain maps to 2–136 (ILLDTNVISE…EAAGLNVINP (135 aa)). 2 residues coordinate Mg(2+): D5 and D104.

The protein belongs to the PINc/VapC protein family. The cofactor is Mg(2+).

Functionally, toxic component of a type II toxin-antitoxin (TA) system. An RNase. Involved in plasmid stability. This chain is Plasmid stability protein StbB (stbB), found in Pseudomonas syringae pv. tomato (strain ATCC BAA-871 / DC3000).